The primary structure comprises 141 residues: Large ribosomal subunit protein uL11 (141 aa).

The protein belongs to the universal ribosomal protein uL11 family. Part of the ribosomal stalk of the 50S ribosomal subunit. Interacts with L10 and the large rRNA to form the base of the stalk. L10 forms an elongated spine to which L12 dimers bind in a sequential fashion forming a multimeric L10(L12)X complex. Post-translationally, one or more lysine residues are methylated.

In terms of biological role, forms part of the ribosomal stalk which helps the ribosome interact with GTP-bound translation factors. The sequence is that of Large ribosomal subunit protein uL11 from Synechococcus sp. (strain RCC307).